Consider the following 387-residue polypeptide: Proline-rich protein 5 (387 aa).

2 interaction with RICTOR regions span residues 10 to 96 (MSSP…LTKG) and 189 to 219 (HESR…YGLY). Residues 13 to 34 (PSLSDLGKREPGAAGTDERGTQ) form a disordered region. The segment covering 18 to 33 (LGKREPGAAGTDERGT) has biased composition (basic and acidic residues). A Phosphoserine modification is found at Ser-253. Residues 262–387 (NPVAEHEAEG…EAPGGRPSVV (126 aa)) are disordered. Residues 305 to 314 (SGTFRSSPTP) show a composition bias toward polar residues. Ser-373 is subject to Phosphoserine.

This sequence belongs to the PROTOR family. In terms of assembly, associated component of the mechanistic target of rapamycin complex 2 (mTORC2). Binds directly to MTOR and RICTOR within the TORC2 complex. As to expression, ubiquitously expressed. Expressed at high levels in kidney.

Functionally, associated subunit of mTORC2, which regulates cell growth and survival in response to hormonal signals. mTORC2 is activated by growth factors, but, in contrast to mTORC1, seems to be nutrient-insensitive. mTORC2 seems to function upstream of Rho GTPases to regulate the actin cytoskeleton, probably by activating one or more Rho-type guanine nucleotide exchange factors. PRR5 plays an important role in regulation of PDGFRB expression and in modulation of platelet-derived growth factor signaling. May act as a tumor suppressor in breast cancer. The chain is Proline-rich protein 5 from Mus musculus (Mouse).